An 889-amino-acid polypeptide reads, in one-letter code: Coatomer subunit beta' (889 aa).

6 WD repeats span residues 11-41 (NRSD…ELWN), 53-83 (VTET…RVFN), 95-125 (AHPD…KLWN), 138-169 (GHEH…KVWS), 182-214 (GQER…KIWD), and 226-256 (GHMS…KIWN). At serine 326 the chain carries Phosphoserine. Positions 806-889 (CGAEGLPGSS…AVPEPVEEES (84 aa)) are disordered. Basic and acidic residues predominate over residues 836–864 (DENKEAEVEDSEFKESNSEAVEAEKKEEE). The span at 866–879 (PQQQQSEQQPEQGE) shows a compositional bias: low complexity.

It belongs to the WD repeat COPB2 family. Oligomeric complex that consists of at least the alpha, beta, beta', gamma, delta, epsilon and zeta subunits. Interacts with the ESCRT-0 subunit VPS27.

The protein resides in the cytoplasm. Its subcellular location is the golgi apparatus membrane. It is found in the cytoplasmic vesicle. The protein localises to the COPI-coated vesicle membrane. The coatomer is a cytosolic protein complex that binds to dilysine motifs and reversibly associates with Golgi non-clathrin-coated vesicles, which further mediate biosynthetic protein transport from the ER, via the Golgi up to the trans Golgi network. Coatomer complex is required for budding from Golgi membranes, and is essential for the retrograde Golgi-to-ER transport of dilysine-tagged proteins. This is Coatomer subunit beta' (SEC27) from Saccharomyces cerevisiae (strain ATCC 204508 / S288c) (Baker's yeast).